The following is a 173-amino-acid chain: Transcription factor HES-2 (173 aa).

The region spanning leucine 13–leucine 70 is the bHLH domain. Positions tyrosine 86 to leucine 119 constitute an Orange domain. The interval leucine 128–tryptophan 173 is disordered. Positions alanine 141–glycine 166 are enriched in pro residues. The WRPW motif signature appears at tryptophan 170–tryptophan 173.

In terms of assembly, transcription repression requires formation of a complex with a corepressor protein of the Groucho/TLE family. In terms of tissue distribution, expressed in placenta, pancreatic cancer, colon cancer with RER, cervical cancer, and in head and neck tumors.

It is found in the nucleus. Functionally, transcriptional repressor of genes that require a bHLH protein for their transcription. The polypeptide is Transcription factor HES-2 (HES2) (Homo sapiens (Human)).